The primary structure comprises 255 residues: Taurine import ATP-binding protein TauB (255 aa).

Residues 2–229 (LQISHLYADY…RFVAGESSRS (228 aa)) form the ABC transporter domain. Residue 34 to 41 (GPSGCGKT) coordinates ATP.

Belongs to the ABC transporter superfamily. Taurine importer (TC 3.A.1.17.1) family. In terms of assembly, the complex is composed of two ATP-binding proteins (TauB), two transmembrane proteins (TauC) and a solute-binding protein (TauA).

The protein localises to the cell inner membrane. It carries out the reaction taurine(out) + ATP + H2O = taurine(in) + ADP + phosphate + H(+). Its function is as follows. Part of the ABC transporter complex TauABC involved in taurine import. Responsible for energy coupling to the transport system. The protein is Taurine import ATP-binding protein TauB of Escherichia coli O6:K15:H31 (strain 536 / UPEC).